Reading from the N-terminus, the 642-residue chain is Tigger transposable element-derived protein 5 (642 aa).

2 stretches are compositionally biased toward pro residues: residues 1–10 and 19–43; these read MYPAGPPAGP and LPGP…PGPR. A disordered region spans residues 1 to 45; that stretch reads MYPAGPPAGPVPRRGRRPLPGPPAPAPAPVPAARPPPPAPGPRPR. The HTH psq-type domain occupies 47-98; it reads AVKMAFRKAYSIKDKLQAIERVKGGERQASVCRDFGVPGGTLRGWLKDEPKL. DNA-binding regions (H-T-H motif) lie at residues 74–94 and 145–178; these read QASV…WLKD and PLIQ…WQKR. The HTH CENPB-type domain occupies 112 to 185; it reads QRKKMRLANE…QKRHGISSQR (74 aa). A disordered region spans residues 185–233; it reads RFYGEAGPPAPSPAPGPPVKEEPALPSGAGPLPDRAPAPPPPAEGGYGD. Pro residues-rich tracts occupy residues 192–202 and 218–227; these read PPAPSPAPGPP and DRAPAPPPPA. DDE-1 domains are found at residues 233-357 and 410-477; these read DEQI…VLLV and RAHI…ERCW. The tract at residues 535 to 587 is disordered; the sequence is LDDDGGPPEGCREEVGPALPPAAPPAPASLPSAMGGGEDEEEATDYGGTSVPT. Over residues 552-562 the composition is skewed to pro residues; that stretch reads ALPPAAPPAPA.

This sequence belongs to the tigger transposable element derived protein family.

It is found in the nucleus. The chain is Tigger transposable element-derived protein 5 (TIGD5) from Homo sapiens (Human).